The following is a 529-amino-acid chain: Zinc metalloproteinase MspA (529 aa).

Residues 1–24 (MHHNYYLSPLAVALALGMVSPAKA) form the signal peptide. Positions 25 to 204 (ADPILLQNAS…PFVQWNDIKT (180 aa)) are excised as a propeptide. H365 provides a ligand contact to Zn(2+). E366 is a catalytic residue. H369 and E389 together coordinate Zn(2+). H451 acts as the Proton donor in catalysis.

It belongs to the peptidase M4 family. Zn(2+) is required as a cofactor.

The polypeptide is Zinc metalloproteinase MspA (mspA) (Legionella longbeachae).